Here is a 907-residue protein sequence, read N- to C-terminus: Nuclear receptor coactivator 7 (907 aa).

Residues 1 to 12 (METKEEKKERRQ) are compositionally biased toward basic and acidic residues. Positions 1–29 (METKEEKKERRQGYFARLKKKRQAKQNTE) form a coiled coil. Disordered stretches follow at residues 1–51 (METK…DDES), 63–83 (DNCK…RKKK), and 99–121 (YSTD…SQKP). Positions 25–41 (KQNTETVSANSPGSPVS) are enriched in polar residues. Composition is skewed to basic and acidic residues over residues 68 to 78 (AGEKETVPEKE) and 99 to 116 (YSTD…EKKM). Positions 125–168 (IEYTAGNQDTINSIALKFNITPNKLVELNKLFTHTIVPGQILFV) constitute a LysM domain. Disordered stretches follow at residues 335–373 (LSKE…QSSE) and 401–443 (DPHV…MDRG). Over residues 401–422 (DPHVKEPSEEKNVSDIRTKEDS) the composition is skewed to basic and acidic residues. Positions 746 to 907 (ALLENMHIEQ…IQDVEVWTFE (162 aa)) constitute a TLDc domain.

This sequence belongs to the OXR1 family.

The protein resides in the nucleus. Functionally, enhances the transcriptional activities of several nuclear receptors. This is Nuclear receptor coactivator 7 (NCOA7) from Gallus gallus (Chicken).